We begin with the raw amino-acid sequence, 356 residues long: Thymidine kinase (356 aa).

A disordered region spans residues 1–29; it reads MMDSRATYVPPKKISESNSNAEEDPTDCS. Position 61–68 (61–68) interacts with ATP; sequence GCVGVGKT. The active-site Proton acceptor is the Glu86. Gln122 contributes to the substrate binding site. Arg208 provides a ligand contact to ATP. Arg214 contributes to the substrate binding site.

Belongs to the herpesviridae thymidine kinase family. Homodimer.

The catalysed reaction is thymidine + ATP = dTMP + ADP + H(+). Catalyzes the transfer of the gamma-phospho group of ATP to thymidine to generate dTMP in the salvage pathway of pyrimidine synthesis. The dTMP serves as a substrate for DNA polymerase during viral DNA replication. Allows the virus to be reactivated and to grow in non-proliferative cells lacking a high concentration of phosphorylated nucleic acid precursors. The sequence is that of Thymidine kinase from Elephas maximus (Indian elephant).